The primary structure comprises 367 residues: MDANTTRNESFSLDCELVNPNSTLANVYFLSAVYSMYAIIFVVALIGNSFVCYIVLSSPPMRTVTNFFILNLAIGDVLITLLCVPFTSVSLLMQYWPFGGILCPVVNYSQALSVFVSAYTLVAISIDKYMIIMWPLKPRISKRFATYIIALVWLIAGITVLPSATFTTLINDENILGTSAYEQCDKYICAEEYSKVGQEYGDLYTKVLMFLQYVIPSLVLLFTYTSIGVVIWCHRIPGEAENSRDQRIAKNKTKMIKMMVTVVCVYTICWLPYNVLMIFKEHISGSVMVYLYFPLHGLAMSHACYNPIIYCYMNARFRNGFLQVMMSIPCLRRCNSINDISKILTCRWKVRRVHLYREITRAQPTSA.

Residues 1-35 lie on the Extracellular side of the membrane; it reads MDANTTRNESFSLDCELVNPNSTLANVYFLSAVYS. Residues asparagine 4, asparagine 8, and asparagine 21 are each glycosylated (N-linked (GlcNAc...) asparagine). The chain crosses the membrane as a helical span at residues 36 to 56; the sequence is MYAIIFVVALIGNSFVCYIVL. Residues 57-66 are Cytoplasmic-facing; it reads SSPPMRTVTN. The chain crosses the membrane as a helical span at residues 67-87; it reads FFILNLAIGDVLITLLCVPFT. At 88-113 the chain is on the extracellular side; that stretch reads SVSLLMQYWPFGGILCPVVNYSQALS. A glycan (N-linked (GlcNAc...) asparagine) is linked at asparagine 107. Residues 114–134 traverse the membrane as a helical segment; that stretch reads VFVSAYTLVAISIDKYMIIMW. Residues 135 to 143 are Cytoplasmic-facing; that stretch reads PLKPRISKR. The helical transmembrane segment at 144 to 164 threads the bilayer; that stretch reads FATYIIALVWLIAGITVLPSA. Residues 165 to 212 are Extracellular-facing; that stretch reads TFTTLINDENILGTSAYEQCDKYICAEEYSKVGQEYGDLYTKVLMFLQ. Residues 213–233 traverse the membrane as a helical segment; that stretch reads YVIPSLVLLFTYTSIGVVIWC. The Cytoplasmic portion of the chain corresponds to 234-258; that stretch reads HRIPGEAENSRDQRIAKNKTKMIKM. The helical transmembrane segment at 259–279 threads the bilayer; it reads MVTVVCVYTICWLPYNVLMIF. Over 280–282 the chain is Extracellular; sequence KEH. A helical membrane pass occupies residues 283-303; that stretch reads ISGSVMVYLYFPLHGLAMSHA. Residues 304-367 lie on the Cytoplasmic side of the membrane; it reads CYNPIIYCYM…EITRAQPTSA (64 aa).

It belongs to the G-protein coupled receptor 1 family.

It localises to the cell membrane. Receptor for the neuropeptides RYamide-1 and RYamide-2. The activity of this receptor is mediated by G proteins which activate a phosphatidyl-inositol-calcium second messenger system. RYamide-2 is the most potent activator. This chain is RYamide receptor, found in Tribolium castaneum (Red flour beetle).